The sequence spans 427 residues: Heterogeneous nuclear ribonucleoprotein K (427 aa).

The disordered stretch occupies residues 1 to 34 (METEQQEETFTNTETNGKRPAEDMEEEQAFKRSR). Residues 16 to 34 (NGKRPAEDMEEEQAFKRSR) show a composition bias toward basic and acidic residues. KH domains lie at 39–101 (MVEL…LKKI) and 117–182 (DCEL…IKII). 2 repeat units span residues 51–73 (AGAVIGKGGKNIKALRTDYNASV) and 56–59 (GKGG). Residues 51–385 (AGAVIGKGGK…QIRHESGASI (335 aa)) are 2 X 22 AA approximate repeats. Residues 56–371 (GKGGKNIKAL…LAGSIIGKGG (316 aa)) are 5 X 4 AA repeats of G-X-G-G. The RNA-binding RGG-box stretch occupies residues 209-246 (YGGFTMMFDDRRGRPVGFPMRGRGGFDRMPPNRGGRPM). Tandem repeats lie at residues 218-223 (DRRGRP), 230-233 (GRGG), and 240-243 (NRGG). The 2 X 6 AA approximate repeats stretch occupies residues 218–302 (DRRGRPVGFP…LMSYDRRGRP (85 aa)). The disordered stretch occupies residues 221–305 (GRPVGFPMRG…YDRRGRPGDR (85 aa)). The segment covering 249-258 (SRRDYDDMSP) has biased composition (basic and acidic residues). Repeat copies occupy residues 268-271 (GRGG), 297-302 (DRRGRP), 363-385 (AGSIIGKGGQRIKQIRHESGASI), and 368-371 (GKGG). Residues 295–305 (SYDRRGRPGDR) are compositionally biased toward basic and acidic residues. The region spanning 351 to 415 (IITTQVTIPK…DQIQNAQYLL (65 aa)) is the KH 3 domain.

It localises to the cytoplasm. The protein localises to the nucleus. The protein resides in the nucleoplasm. One of the major pre-mRNA-binding proteins. Binds tenaciously to poly(C) sequences. Likely to play a role in the nuclear metabolism of hnRNAs, particularly for pre-mRNAs that contain cytidine-rich sequences. Can also bind poly(C) single-stranded DNA. May play an important role in p53/TP53 response to DNA damage, acting at the level of both transcription activation and repression. As part of a ribonucleoprotein complex, may negatively regulate the transcription of genes involved in neuronal differentiation. The protein is Heterogeneous nuclear ribonucleoprotein K (HNRNPK) of Gallus gallus (Chicken).